Consider the following 430-residue polypeptide: Adenylosuccinate synthetase (430 aa).

GTP-binding positions include glycine 12–lysine 18 and glycine 40–threonine 42. Aspartate 13 functions as the Proton acceptor in the catalytic mechanism. Residues aspartate 13 and glycine 40 each contribute to the Mg(2+) site. IMP contacts are provided by residues aspartate 13–lysine 16, asparagine 38–histidine 41, threonine 128, arginine 142, glutamine 223, threonine 238, and arginine 302. Residue histidine 41 is the Proton donor of the active site. Residue threonine 298 to arginine 304 coordinates substrate. Residues arginine 304, serine 330–aspartate 332, and serine 412–glycine 414 each bind GTP.

The protein belongs to the adenylosuccinate synthetase family. Homodimer. Mg(2+) is required as a cofactor.

The protein localises to the cytoplasm. The enzyme catalyses IMP + L-aspartate + GTP = N(6)-(1,2-dicarboxyethyl)-AMP + GDP + phosphate + 2 H(+). The protein operates within purine metabolism; AMP biosynthesis via de novo pathway; AMP from IMP: step 1/2. Functionally, plays an important role in the de novo pathway of purine nucleotide biosynthesis. Catalyzes the first committed step in the biosynthesis of AMP from IMP. This is Adenylosuccinate synthetase from Bacillus licheniformis (strain ATCC 14580 / DSM 13 / JCM 2505 / CCUG 7422 / NBRC 12200 / NCIMB 9375 / NCTC 10341 / NRRL NRS-1264 / Gibson 46).